Here is a 353-residue protein sequence, read N- to C-terminus: 4-hydroxy-3-methylbut-2-en-1-yl diphosphate synthase (flavodoxin) (353 aa).

[4Fe-4S] cluster is bound by residues Cys-265, Cys-268, Cys-300, and Glu-307.

Belongs to the IspG family. Requires [4Fe-4S] cluster as cofactor.

It carries out the reaction (2E)-4-hydroxy-3-methylbut-2-enyl diphosphate + oxidized [flavodoxin] + H2O + 2 H(+) = 2-C-methyl-D-erythritol 2,4-cyclic diphosphate + reduced [flavodoxin]. The protein operates within isoprenoid biosynthesis; isopentenyl diphosphate biosynthesis via DXP pathway; isopentenyl diphosphate from 1-deoxy-D-xylulose 5-phosphate: step 5/6. Converts 2C-methyl-D-erythritol 2,4-cyclodiphosphate (ME-2,4cPP) into 1-hydroxy-2-methyl-2-(E)-butenyl 4-diphosphate. The protein is 4-hydroxy-3-methylbut-2-en-1-yl diphosphate synthase (flavodoxin) of Sulfurihydrogenibium sp. (strain YO3AOP1).